A 570-amino-acid polypeptide reads, in one-letter code: Methyl-coenzyme M reductase subunit alpha (570 aa).

Glutamine 161 serves as a coordination point for coenzyme F430. Coenzyme B is bound by residues arginine 239, 270-271, and arginine 284; that span reads KH. Pros-methylhistidine is present on histidine 271. Arginine 285 is modified (5-methylarginine). Tyrosine 346 and phenylalanine 464 together coordinate coenzyme M. 1-thioglycine is present on glycine 465. The residue at position 470 (aspartate 470) is a (Z)-2,3-didehydroaspartate. Cysteine 472 carries the S-methylcysteine modification.

This sequence belongs to the methyl-coenzyme M reductase alpha subunit family. MCR is a hexamer of two alpha, two beta, and two gamma chains, forming a dimer of heterotrimers. Coenzyme F430 serves as cofactor. The alpha subunit contains five modified amino acids near the active site region. Is methylated on His-271, Arg-285 and Cys-472, probably by the action of specific S-adenosylmethionine-dependent methyltransferases. Also contains a thioglycine at position 465, forming a thiopeptide bond. Contains a didehydroaspartate residue at position 470. The methylation on C5 of Arg-285 is a post-translational methylation not essential in vivo, but which plays a role for the stability and structural integrity of MCR. Does not show a methylation at Gln-420, as shown for M.marburgensis.

Its subcellular location is the cytoplasm. It catalyses the reaction coenzyme B + methyl-coenzyme M = methane + coenzyme M-coenzyme B heterodisulfide. It functions in the pathway one-carbon metabolism; methyl-coenzyme M reduction; methane from methyl-coenzyme M: step 1/1. In terms of biological role, component of the methyl-coenzyme M reductase (MCR) I that catalyzes the reductive cleavage of methyl-coenzyme M (CoM-S-CH3 or 2-(methylthio)ethanesulfonate) using coenzyme B (CoB or 7-mercaptoheptanoylthreonine phosphate) as reductant which results in the production of methane and the mixed heterodisulfide of CoB and CoM (CoM-S-S-CoB). This is the final step in methanogenesis. In Methanosarcina barkeri (strain Fusaro / DSM 804), this protein is Methyl-coenzyme M reductase subunit alpha (mcrA).